Here is a 116-residue protein sequence, read N- to C-terminus: Putative RNase MJ0125 (116 aa).

Catalysis depends on residues Arg76 and His81. Positions 76–83 (RDKLIHQY) match the RX(4)HXY motif motif. At Tyr83 the chain carries O-di-AMP-tyrosine.

The protein belongs to the HepT RNase toxin family. Homodimer, probably forms a complex with cognate antitoxin MJ0126. Post-translationally, modified by cognate antitoxin MJ0126; probably at least 2 successive AMPylation events occur on Tyr-83.

Probable toxic component of a putative type VII toxin-antitoxin (TA) system, probably an RNase. Probably neutralized by cognate antitoxin MJ0126. Neutralization may be due to AMPylation by MJ0126. The sequence is that of Putative RNase MJ0125 from Methanocaldococcus jannaschii (strain ATCC 43067 / DSM 2661 / JAL-1 / JCM 10045 / NBRC 100440) (Methanococcus jannaschii).